Reading from the N-terminus, the 495-residue chain is 3-octaprenyl-4-hydroxybenzoate carboxy-lyase (495 aa).

N172 contacts Mn(2+). Prenylated FMN is bound by residues 175 to 177 (IYR), 189 to 191 (RWL), and 194 to 195 (RG). E238 lines the Mn(2+) pocket. D287 (proton donor) is an active-site residue.

This sequence belongs to the UbiD family. As to quaternary structure, homohexamer. Prenylated FMN is required as a cofactor. Requires Mn(2+) as cofactor.

It is found in the cell membrane. The catalysed reaction is a 4-hydroxy-3-(all-trans-polyprenyl)benzoate + H(+) = a 2-(all-trans-polyprenyl)phenol + CO2. The protein operates within cofactor biosynthesis; ubiquinone biosynthesis. Its function is as follows. Catalyzes the decarboxylation of 3-octaprenyl-4-hydroxy benzoate to 2-octaprenylphenol, an intermediate step in ubiquinone biosynthesis. The sequence is that of 3-octaprenyl-4-hydroxybenzoate carboxy-lyase from Yersinia enterocolitica serotype O:8 / biotype 1B (strain NCTC 13174 / 8081).